Reading from the N-terminus, the 391-residue chain is Nucleosome assembly protein 1-like 1 (391 aa).

Residues 1–10 show a composition bias toward basic and acidic residues; it reads MADIDNKEQS. The tract at residues 1–32 is disordered; sequence MADIDNKEQSELDQDLDDVEEVEEEETGEETK. The residue at position 2 (Ala2) is an N-acetylalanine. Ser10 carries the phosphoserine modification. Acidic residues predominate over residues 11 to 28; the sequence is ELDQDLDDVEEVEEEETG. Phosphothreonine is present on residues Thr62 and Thr64. The residue at position 69 (Ser69) is a Phosphoserine. The residue at position 116 (Lys116) is an N6-acetyllysine. Residues 125–150 carry the NAP1L motif motif; that stretch reads YEPTEEECEWKPDEEDEISEELKEKA. Acidic residues predominate over residues 132-143; it reads CEWKPDEEDEIS. Residues 132 to 163 form a disordered region; it reads CEWKPDEEDEISEELKEKAKVEDEKKDEEKED. The residue at position 143 (Ser143) is a Phosphoserine. Over residues 144–163 the composition is skewed to basic and acidic residues; that stretch reads EELKEKAKVEDEKKDEEKED. Residues 273–279 carry the Nuclear localization signal motif; it reads IKKKQKH. Residues 345–391 are disordered; that stretch reads EAIEDDDDDYDEEGEEADEEGEEEGDEENDPDYDPKKDQNPAECKQQ. Residues 346–376 are compositionally biased toward acidic residues; sequence AIEDDDDDYDEEGEEADEEGEEEGDEENDPD. Glu359 and Glu360 each carry 5-glutamyl polyglycine. Residues 377-391 are compositionally biased toward basic and acidic residues; the sequence is YDPKKDQNPAECKQQ. The residue at position 388 (Cys388) is a Cysteine methyl ester. Residue Cys388 is the site of S-farnesyl cysteine attachment. A propeptide spans 389-391 (removed in mature form); that stretch reads KQQ.

This sequence belongs to the nucleosome assembly protein (NAP) family. In terms of assembly, homodimer. The dimer binds strongly and sequentially to single and double H2A-H2B heterodimers. Interacts with ERCC6; this interaction increases ERCC6 processivity. Interacts with RAD54. Interacts with SETD1A. Polyglycylated by TTLL10 on glutamate residues, resulting in polyglycine chains on the gamma-carboxyl group. Both polyglutamylation and polyglycylation modifications can coexist on the same protein on adjacent residues, and lowering polyglycylation levels increases polyglutamylation, and reciprocally. Post-translationally, polyglutamylated by TTLL4 on glutamate residues, resulting in polyglutamate chains on the gamma-carboxyl group. Both polyglutamylation and polyglycylation modifications can coexist on the same protein on adjacent residues, and lowering polyglycylation levels increases polyglutamylation, and reciprocally.

It localises to the nucleus. It is found in the melanosome. Its subcellular location is the cytoplasm. In terms of biological role, histone chaperone that plays a role in the nuclear import of H2A-H2B and nucleosome assembly. Also participates in several important DNA repair mechanisms: greatly enhances ERCC6-mediated chromatin remodeling which is essential for transcription-coupled nucleotide excision DNA repair. Also stimulates homologous recombination (HR) by RAD51 and RAD54 which is essential in mitotic DNA double strand break (DSB) repair. Plays a key role in the regulation of embryonic neurogenesis. Promotes the proliferation of neural progenitors and inhibits neuronal differentiation during cortical development. Regulates neurogenesis via the modulation of RASSF10; regulates RASSF10 expression by promoting SETD1A-mediated H3K4 methylation at the RASSF10 promoter. This chain is Nucleosome assembly protein 1-like 1 (NAP1L1), found in Bos taurus (Bovine).